The primary structure comprises 470 residues: Poly(A) polymerase catalytic subunit (470 aa).

Catalysis depends on residues Asp-192 and Asp-194.

The protein belongs to the poxviridae poly(A) polymerase catalytic subunit family. In terms of assembly, heterodimer of a large (catalytic) subunit and a small (regulatory) subunit.

It carries out the reaction RNA(n) + ATP = RNA(n)-3'-adenine ribonucleotide + diphosphate. Polymerase that creates the 3'-poly(A) tail of mRNA's. The polypeptide is Poly(A) polymerase catalytic subunit (PAPL) (Molluscum contagiosum virus subtype 1 (MOCV)).